The sequence spans 58 residues: Preprotein translocase subunit SecG (58 aa).

The Cytoplasmic portion of the chain corresponds to 1–32 (MAQKKKSSGSGLMSSAGLMTYYDADKKAIHVQ). A helical transmembrane segment spans residues 33–54 (PKTVFIFGAICGIVILAFSAGF). The Extracellular segment spans residues 55–58 (GLWP).

The protein belongs to the SEC61-beta family. Component of the protein translocase complex. Heterotrimer consisting of alpha (SecY), beta (SecG) and gamma (SecE) subunits. Can form oligomers of the heterotrimer.

It is found in the cell membrane. Involved in protein export. The function of the beta subunit is unknown, but it may be involved in stabilization of the trimeric complex. This is Preprotein translocase subunit SecG from Methanococcoides burtonii (strain DSM 6242 / NBRC 107633 / OCM 468 / ACE-M).